The primary structure comprises 741 residues: Protein lin-54 homolog (741 aa).

The 114-residue stretch at 513–626 (PRKPCNCTKS…KCIGCKNFEE (114 aa)) folds into the CRC domain. A DNA-binding region spans residues 515-528 (KPCNCTKSLCLKLY). Zn(2+) is bound by residues cysteine 517, cysteine 519, cysteine 524, cysteine 529, cysteine 531, cysteine 538, cysteine 541, cysteine 543, and cysteine 546. The interval 575 to 588 (IGKGKEGESDRRHS) is linker. The Zn(2+) site is built by cysteine 591, cysteine 593, cysteine 598, cysteine 603, cysteine 605, cysteine 612, cysteine 616, cysteine 618, and cysteine 621. The interval 591–604 (CNCKRSGCLKNYCE) is DNA-binding.

It belongs to the lin-54 family. In terms of assembly, component of the DREAM complex.

Its subcellular location is the nucleus. Component of the DREAM complex, a multiprotein complex that can both act as a transcription activator or repressor depending on the context. Specifically recognizes the consensus motif 5'-TTYRAA-3' in target DNA. The polypeptide is Protein lin-54 homolog (lin54) (Xenopus tropicalis (Western clawed frog)).